The sequence spans 85 residues: Senescence-associated and QQS-related protein (85 aa).

Residues 1–24 (MSFRKVEKKPTEMGRNMTHEKSDS) show a composition bias toward basic and acidic residues. Disordered stretches follow at residues 1-35 (MSFR…PMTV) and 55-85 (SGKA…FPNY). Positions 58-77 (ARSNYNLTGTAKGTGPINSF) are enriched in polar residues.

Expressed predominantly within leaves and cotyledons vasculatures. Mainly observed in fully expanded leaves, at the base of mature inflorescences, in senescing leaves and cauline leaves, and, to a lower extent, in hypocotyls and rosette leaves prior to flowering.

Functionally, plays a role in carbon allocation, including during senescence and stresses, thus impacting starch accumulation. The polypeptide is Senescence-associated and QQS-related protein (Arabidopsis thaliana (Mouse-ear cress)).